Consider the following 456-residue polypeptide: Amino acid transporter AVT6B (456 aa).

A run of 11 helical transmembrane segments spans residues 37–57 (FSGA…MALP), 58–78 (ATMK…MAFL), 118–138 (ILVS…DVLA), 164–184 (TFVL…FKRI), 191–211 (SAIS…ITII), 236–256 (LFTV…VHSI), 273–293 (ALAM…LLFG), 328–348 (LMLV…GLIF), 365–385 (SITA…PSIW), 388–408 (FQFT…AAVI), and 423–443 (IAIC…YSDA).

This sequence belongs to the amino acid/polyamine transporter 2 family. Amino acid/auxin permease (AAAP) (TC 2.A.18.6) subfamily.

The protein resides in the membrane. This chain is Amino acid transporter AVT6B, found in Arabidopsis thaliana (Mouse-ear cress).